The chain runs to 275 residues: Release factor glutamine methyltransferase (275 aa).

S-adenosyl-L-methionine is bound by residues 114–118 (GTGSG), Asp-137, Trp-165, and Asn-180. 180–183 (NPPY) is a binding site for substrate.

It belongs to the protein N5-glutamine methyltransferase family. PrmC subfamily.

The enzyme catalyses L-glutaminyl-[peptide chain release factor] + S-adenosyl-L-methionine = N(5)-methyl-L-glutaminyl-[peptide chain release factor] + S-adenosyl-L-homocysteine + H(+). Its function is as follows. Methylates the class 1 translation termination release factors RF1/PrfA and RF2/PrfB on the glutamine residue of the universally conserved GGQ motif. The chain is Release factor glutamine methyltransferase from Xylella fastidiosa (strain 9a5c).